Reading from the N-terminus, the 253-residue chain is Phosphoglycerate mutase 2 (253 aa).

A Phosphothreonine modification is found at threonine 3. Residues 10–17, 23–24, arginine 62, 89–92, lysine 100, and 116–117 each bind substrate; these read RHGESTWN, CG, ERHY, and RR. The Tele-phosphohistidine intermediate role is filled by histidine 11. Position 14 is a phosphoserine (serine 14). Glutamate 89 acts as the Proton donor/acceptor in catalysis. Serine 118 bears the Phosphoserine mark. Phosphotyrosine is present on residues tyrosine 132 and tyrosine 133. Serine 135 carries the post-translational modification Phosphoserine. Threonine 152 is subject to Phosphothreonine. 187 to 188 is a substrate binding site; it reads GN.

The protein belongs to the phosphoglycerate mutase family. BPG-dependent PGAM subfamily. Homodimer.

It carries out the reaction (2R)-2-phosphoglycerate = (2R)-3-phosphoglycerate. The catalysed reaction is (2R)-3-phospho-glyceroyl phosphate = (2R)-2,3-bisphosphoglycerate + H(+). Functionally, interconversion of 3- and 2-phosphoglycerate with 2,3-bisphosphoglycerate as the primer of the reaction. Can also catalyze the reaction of EC 5.4.2.4 (synthase), but with a reduced activity. The sequence is that of Phosphoglycerate mutase 2 (PGAM2) from Bos taurus (Bovine).